The primary structure comprises 228 residues: Adapter protein MecA (228 aa).

It belongs to the MecA family. As to quaternary structure, homodimer.

Its function is as follows. Enables the recognition and targeting of unfolded and aggregated proteins to the ClpC protease or to other proteins involved in proteolysis. The protein is Adapter protein MecA of Lacticaseibacillus paracasei (strain ATCC 334 / BCRC 17002 / CCUG 31169 / CIP 107868 / KCTC 3260 / NRRL B-441) (Lactobacillus paracasei).